The following is a 310-amino-acid chain: D-alanine--D-alanine ligase (310 aa).

Residues 107–302 (KQAFQAARLT…FEDLVERILA (196 aa)) enclose the ATP-grasp domain. 135-188 (EFSLPVVVKPSQEGSSVGVSIVKKESEFAAAMKEAFRYDREILVEQFIKGSEVQ) contacts ATP. Residues Asp256, Glu269, and Asn271 each contribute to the Mg(2+) site.

The protein belongs to the D-alanine--D-alanine ligase family. Requires Mg(2+) as cofactor. Mn(2+) is required as a cofactor.

It is found in the cytoplasm. It catalyses the reaction 2 D-alanine + ATP = D-alanyl-D-alanine + ADP + phosphate + H(+). It participates in cell wall biogenesis; peptidoglycan biosynthesis. Its function is as follows. Cell wall formation. This chain is D-alanine--D-alanine ligase, found in Geotalea uraniireducens (strain Rf4) (Geobacter uraniireducens).